Here is a 277-residue protein sequence, read N- to C-terminus: Zinc transporter ZupT (277 aa).

8 helical membrane passes run 7–27 (VLLA…GSAI), 38–58 (FLAV…FVEI), 73–93 (VLAS…IAVI), 133–155 (AGVL…AFSA), 165–187 (AIAV…PIYY), 196–216 (FLYS…GYVV), 220–240 (FFTP…MVYI), and 257–277 (LCIL…LLFL). The Fe(2+) site is built by asparagine 145 and glutamate 148. 2 residues coordinate Zn(2+): glutamate 148 and histidine 173. Fe(2+) is bound by residues asparagine 174, glutamate 177, and glutamate 206. Glutamate 177 contacts Zn(2+).

This sequence belongs to the ZIP transporter (TC 2.A.5) family. ZupT subfamily.

The protein localises to the cell inner membrane. The enzyme catalyses Zn(2+)(in) = Zn(2+)(out). Mediates zinc uptake. May also transport other divalent cations. The sequence is that of Zinc transporter ZupT from Nitratidesulfovibrio vulgaris (strain ATCC 29579 / DSM 644 / CCUG 34227 / NCIMB 8303 / VKM B-1760 / Hildenborough) (Desulfovibrio vulgaris).